The chain runs to 272 residues: Ribosomal RNA small subunit methyltransferase A (272 aa).

6 residues coordinate S-adenosyl-L-methionine: N18, L20, G45, E66, D91, and N113.

This sequence belongs to the class I-like SAM-binding methyltransferase superfamily. rRNA adenine N(6)-methyltransferase family. RsmA subfamily.

It is found in the cytoplasm. The enzyme catalyses adenosine(1518)/adenosine(1519) in 16S rRNA + 4 S-adenosyl-L-methionine = N(6)-dimethyladenosine(1518)/N(6)-dimethyladenosine(1519) in 16S rRNA + 4 S-adenosyl-L-homocysteine + 4 H(+). Its function is as follows. Specifically dimethylates two adjacent adenosines (A1518 and A1519) in the loop of a conserved hairpin near the 3'-end of 16S rRNA in the 30S particle. May play a critical role in biogenesis of 30S subunits. In Yersinia enterocolitica serotype O:8 / biotype 1B (strain NCTC 13174 / 8081), this protein is Ribosomal RNA small subunit methyltransferase A.